A 74-amino-acid chain; its full sequence is ATP synthase subunit c (74 aa).

The next 2 membrane-spanning stretches (helical) occupy residues 8-28 and 52-72; these read FIGI…VSNI and IGAG…MLLI.

This sequence belongs to the ATPase C chain family. F-type ATPases have 2 components, F(1) - the catalytic core - and F(0) - the membrane proton channel. F(1) has five subunits: alpha(3), beta(3), gamma(1), delta(1), epsilon(1). F(0) has three main subunits: a(1), b(2) and c(10-14). The alpha and beta chains form an alternating ring which encloses part of the gamma chain. F(1) is attached to F(0) by a central stalk formed by the gamma and epsilon chains, while a peripheral stalk is formed by the delta and b chains.

It localises to the cell inner membrane. Functionally, f(1)F(0) ATP synthase produces ATP from ADP in the presence of a proton or sodium gradient. F-type ATPases consist of two structural domains, F(1) containing the extramembraneous catalytic core and F(0) containing the membrane proton channel, linked together by a central stalk and a peripheral stalk. During catalysis, ATP synthesis in the catalytic domain of F(1) is coupled via a rotary mechanism of the central stalk subunits to proton translocation. Key component of the F(0) channel; it plays a direct role in translocation across the membrane. A homomeric c-ring of between 10-14 subunits forms the central stalk rotor element with the F(1) delta and epsilon subunits. The chain is ATP synthase subunit c from Rickettsia felis (strain ATCC VR-1525 / URRWXCal2) (Rickettsia azadi).